A 197-amino-acid polypeptide reads, in one-letter code: Regulator of free ubiquitin chains 1 (197 aa).

Belongs to the RFU1 family.

The protein localises to the endosome. Its function is as follows. Inhibitor of the DOA4 deubiquitinase involved in the regulation of protein degradation by the proteasome and maintenance of a normal level of free ubiquitin. The chain is Regulator of free ubiquitin chains 1 (RFU1) from Vanderwaltozyma polyspora (strain ATCC 22028 / DSM 70294 / BCRC 21397 / CBS 2163 / NBRC 10782 / NRRL Y-8283 / UCD 57-17) (Kluyveromyces polysporus).